A 193-amino-acid polypeptide reads, in one-letter code: ER membrane protein complex subunit 4 (193 aa).

2 helical membrane-spanning segments follow: residues 91 to 111 (ILAY…TLML) and 137 to 157 (LWPA…IGVY).

It belongs to the EMC4 family.

It localises to the endoplasmic reticulum membrane. The sequence is that of ER membrane protein complex subunit 4 from Schizosaccharomyces pombe (strain 972 / ATCC 24843) (Fission yeast).